Reading from the N-terminus, the 125-residue chain is Succinate dehydrogenase assembly factor 3, mitochondrial (125 aa).

The N-terminal 42 residues, 1 to 42, are a transit peptide targeting the mitochondrion; sequence MRTTNHLYRTVHRQGKPLLPPLHLYRRILRAHRTFPPAQRAL.

It belongs to the complex I LYR family. SDHAF3 subfamily. In terms of assembly, interacts with the iron-sulfur protein subunit within the SDH catalytic dimer.

The protein resides in the mitochondrion matrix. Plays an essential role in the assembly of succinate dehydrogenase (SDH), an enzyme complex (also referred to as respiratory complex II) that is a component of both the tricarboxylic acid (TCA) cycle and the mitochondrial electron transport chain, and which couples the oxidation of succinate to fumarate with the reduction of ubiquinone (coenzyme Q) to ubiquinol. Promotes maturation of the iron-sulfur protein subunit of the SDH catalytic dimer, protecting it from the deleterious effects of oxidants. May act together with SDHAF1. The chain is Succinate dehydrogenase assembly factor 3, mitochondrial from Eremothecium gossypii (strain ATCC 10895 / CBS 109.51 / FGSC 9923 / NRRL Y-1056) (Yeast).